A 245-amino-acid chain; its full sequence is Cypemycin N-terminal methyltransferase (245 aa).

The protein belongs to the methyltransferase superfamily.

The catalysed reaction is N-terminal L-alanyl-[cypemycin] + 2 S-adenosyl-L-methionine = N-terminal N,N-dimethyl-L-alanyl-[cypemycin] + 2 S-adenosyl-L-homocysteine + 3 H(+). Involved in the biosynthesis of the lanaridin cypemycin. The enzyme can methylate a variety of oligopeptides, cyclic peptides and the epsilon-amino group of lysine. The polypeptide is Cypemycin N-terminal methyltransferase (Streptomyces sp).